A 146-amino-acid chain; its full sequence is Meiotically up-regulated gene 151 protein (146 aa).

The segment at 1-40 (MSLVAYDSEEEEQTSLVNENNDIKGRSEEPHWKIPNSPKA) is disordered. Residues 21–32 (NDIKGRSEEPHW) are compositionally biased toward basic and acidic residues.

The protein localises to the nucleus. Its function is as follows. Has a role in meiosis. The protein is Meiotically up-regulated gene 151 protein (mug151) of Schizosaccharomyces pombe (strain 972 / ATCC 24843) (Fission yeast).